The sequence spans 651 residues: Peptide-N(4)-(N-acetyl-beta-glucosaminyl)asparagine amidase (651 aa).

At Ala-2 the chain carries N-acetylalanine. The region spanning Glu-30 to Lys-91 is the PUB domain. Residues Cys-247, Cys-250, Cys-280, and Cys-283 each coordinate Zn(2+). The Nucleophile role is filled by Cys-306. Active-site residues include His-333 and Asp-350. Positions Glu-451 to Leu-651 constitute a PAW domain.

Belongs to the transglutaminase-like superfamily. PNGase family. As to quaternary structure, component of a complex required to couple retrotranslocation, ubiquitination and deglycosylation composed of NGLY1, SAKS1, AMFR, VCP and RAD23B. Interacts with the proteasome components RAD23B and PSMC1. Interacts with directly with VCP. Interacts with DERL1, bringing it close to the endoplasmic reticulum membrane. Interacts with SAKS1. Requires Zn(2+) as cofactor. As to expression, ubiquitously expressed with highest level in testis.

Its subcellular location is the cytoplasm. The enzyme catalyses Hydrolysis of an N(4)-(acetyl-beta-D-glucosaminyl)asparagine residue in which the glucosamine residue may be further glycosylated, to yield a (substituted) N-acetyl-beta-D-glucosaminylamine and a peptide containing an aspartate residue.. Its activity is regulated as follows. Inhibited by Z-VAD-fmk, a well-known caspase inhibitor, which inhibits enzyme activity through covalent binding of the carbohydrate to the single Cys-306 residue. In terms of biological role, specifically deglycosylates the denatured form of N-linked glycoproteins in the cytoplasm and assists their proteasome-mediated degradation. Cleaves the beta-aspartyl-glucosamine (GlcNAc) of the glycan and the amide side chain of Asn, converting Asn to Asp. Prefers proteins containing high-mannose over those bearing complex type oligosaccharides. Can recognize misfolded proteins in the endoplasmic reticulum that are exported to the cytosol to be destroyed and deglycosylate them, while it has no activity toward native proteins. Deglycosylation is a prerequisite for subsequent proteasome-mediated degradation of some, but not all, misfolded glycoproteins. This chain is Peptide-N(4)-(N-acetyl-beta-glucosaminyl)asparagine amidase (Ngly1), found in Mus musculus (Mouse).